The sequence spans 231 residues: Large ribosomal subunit protein uL5m (231 aa).

This sequence belongs to the universal ribosomal protein uL5 family.

The protein resides in the mitochondrion. In Prototheca wickerhamii, this protein is Large ribosomal subunit protein uL5m (RPL5).